The following is a 173-amino-acid chain: Ribosome maturation factor RimM (173 aa).

The 73-residue stretch at 98–170 (EDEYYWCDLI…RMLITPLEGL (73 aa)) folds into the PRC barrel domain.

The protein belongs to the RimM family. In terms of assembly, binds ribosomal protein uS19.

Its subcellular location is the cytoplasm. An accessory protein needed during the final step in the assembly of 30S ribosomal subunit, possibly for assembly of the head region. Essential for efficient processing of 16S rRNA. May be needed both before and after RbfA during the maturation of 16S rRNA. It has affinity for free ribosomal 30S subunits but not for 70S ribosomes. This chain is Ribosome maturation factor RimM, found in Pelobacter propionicus (strain DSM 2379 / NBRC 103807 / OttBd1).